Consider the following 123-residue polypeptide: Snaclec GPIB-binding protein subunit beta (123 aa).

Cystine bridges form between Cys-2/Cys-13, Cys-30/Cys-119, and Cys-96/Cys-111. Positions 9 to 120 (YGGHCYKLFK…CTRLQYFVCE (112 aa)) constitute a C-type lectin domain.

It belongs to the snaclec family. As to quaternary structure, heterodimer of subunits alpha and beta; disulfide-linked. As to expression, expressed by the venom gland.

Its subcellular location is the secreted. In terms of biological role, binds to platelet GPIb (subunit alpha) (GP1BA) and functions as a receptor blocker for vWF binding to GPIb. The platelet GPIb-binding site resides on the GPIB-BP subunit beta and not on the alpha subunit. At a final concentration of 104 nM totally abolishes vWF-dependent shear-induced platelet aggregation (SIPA) at a high shear stress, but had no effect on SIPA at a low shear stress. This chain is Snaclec GPIB-binding protein subunit beta, found in Bothrops jararaca (Jararaca).